The chain runs to 359 residues: F-box protein At1g10895 (359 aa).

The F-box domain occupies 2 to 48 (TTMSDLDEIMVAEILCRTPMTCLKTVRSVCKKWNALSKKWFFFGKAK).

This chain is F-box protein At1g10895, found in Arabidopsis thaliana (Mouse-ear cress).